The sequence spans 726 residues: Prolyl endopeptidase-like (726 aa).

The residue at position 138 (Ser138) is a Phosphoserine. Active-site charge relay system residues include Ser558, Asp644, and His689.

The protein belongs to the peptidase S9A family. Homodimer. Interacts with the AP-1 complex.

It is found in the cytoplasm. The protein localises to the cytosol. It localises to the golgi apparatus. Its subcellular location is the trans-Golgi network. The protein resides in the cytoskeleton. It is found in the nucleus. Serine peptidase whose precise substrate specificity remains unclear. Does not cleave peptides after a arginine or lysine residue. Regulates trans-Golgi network morphology and sorting by regulating the membrane binding of the AP-1 complex. May play a role in the regulation of synaptic vesicle exocytosis. This chain is Prolyl endopeptidase-like (Prepl), found in Rattus norvegicus (Rat).